A 405-amino-acid polypeptide reads, in one-letter code: BRCA1-A complex subunit Abraxas 1 (405 aa).

In terms of domain architecture, MPN spans 7–153 (SALLSGFVFG…CSTYRLEHAL (147 aa)). Residues 208-262 (SLQEVHKINEMYATLQEELKKMCSDVEVSERSVEKLLTEVSQLKEEINRKKQHKI) are a coiled coil. Residues 365-405 (LHQDEEDCNQETKLALSSAETDEEALENPKDTNEYSYSPTF) form a disordered region. Ser402 bears the Phosphoserine mark. The pSXXF motif motif lies at 402–405 (SPTF).

Belongs to the FAM175 family. Abraxas subfamily. In terms of assembly, component of the BRCA1-A complex. Component of the BRISC complex. Homodimer. Interacts directly (when phosphorylated at Ser-402) with BRCA1. The phosphorylated homodimer can interact directly with two BRCA1 chains, giving rise to a heterotetramer. Phosphorylation of Ser-402 of the pSXXF motif by ATM or ATR constitutes a specific recognition motif for the BRCT domain of BRCA1.

Its subcellular location is the nucleus. Its function is as follows. Involved in DNA damage response and double-strand break (DSB) repair. Component of the BRCA1-A complex, acting as a central scaffold protein that assembles the various components of the complex and mediates the recruitment of BRCA1. The BRCA1-A complex specifically recognizes 'Lys-63'-linked ubiquitinated histones H2A and H2AX at DNA lesion sites, leading to target the BRCA1-BARD1 heterodimer to sites of DNA damage at DSBs. This complex also possesses deubiquitinase activity that specifically removes 'Lys-63'-linked ubiquitin on histones H2A and H2AX. In Gallus gallus (Chicken), this protein is BRCA1-A complex subunit Abraxas 1.